The following is a 126-amino-acid chain: Small ribosomal subunit protein uS13c (126 aa).

The segment at P97 to K126 is disordered. Residues Q101–K126 are compositionally biased toward basic residues.

The protein belongs to the universal ribosomal protein uS13 family. As to quaternary structure, part of the 30S ribosomal subunit.

Its subcellular location is the plastid. The protein localises to the chloroplast. Its function is as follows. Located at the top of the head of the 30S subunit, it contacts several helices of the 16S rRNA. The chain is Small ribosomal subunit protein uS13c from Porphyra purpurea (Red seaweed).